Here is a 293-residue protein sequence, read N- to C-terminus: 3-methyl-2-oxobutanoate hydroxymethyltransferase (293 aa).

A disordered region spans residues 1–29 (MTAAHDRSENQPGRPGGETTAPYGSAPRR). Mg(2+) is bound by residues Asp-73 and Asp-112. 3-methyl-2-oxobutanoate is bound by residues 73-74 (DS), Asp-112, and Lys-142. Mg(2+) is bound at residue Glu-144. The Proton acceptor role is filled by Glu-210.

Belongs to the PanB family. Homodecamer; pentamer of dimers. Requires Mg(2+) as cofactor.

Its subcellular location is the cytoplasm. It catalyses the reaction 3-methyl-2-oxobutanoate + (6R)-5,10-methylene-5,6,7,8-tetrahydrofolate + H2O = 2-dehydropantoate + (6S)-5,6,7,8-tetrahydrofolate. It functions in the pathway cofactor biosynthesis; (R)-pantothenate biosynthesis; (R)-pantoate from 3-methyl-2-oxobutanoate: step 1/2. In terms of biological role, catalyzes the reversible reaction in which hydroxymethyl group from 5,10-methylenetetrahydrofolate is transferred onto alpha-ketoisovalerate to form ketopantoate. The chain is 3-methyl-2-oxobutanoate hydroxymethyltransferase from Saccharopolyspora erythraea (strain ATCC 11635 / DSM 40517 / JCM 4748 / NBRC 13426 / NCIMB 8594 / NRRL 2338).